A 59-amino-acid polypeptide reads, in one-letter code: U-myrmeciitoxin(01)-Mg5a (59 aa).

An N-terminal signal peptide occupies residues 1–21 (MRLSYLSLALAIIFVLTIMHA). Positions 22 to 38 (SNVEAKASADPEPDAVG) are excised as a propeptide.

In terms of tissue distribution, expressed by the venom gland.

The protein localises to the secreted. Its function is as follows. May have antimicrobial properties, like most ant linear peptides. The chain is U-myrmeciitoxin(01)-Mg5a from Myrmecia gulosa (Red bulldog ant).